The primary structure comprises 374 residues: uncharacterized protein (374 aa).

The N-terminal stretch at 1–21 is a signal peptide; sequence MSIISRVCIPCAVLLFAQLHA. Positions 22 to 102 constitute a Fibronectin type-III domain; sequence KELVHVSQLK…ASASAWTSLS (81 aa).

This is an uncharacterized protein from Treponema pallidum (strain Nichols).